A 333-amino-acid polypeptide reads, in one-letter code: Electron transfer flavoprotein subunit alpha, mitochondrial (333 aa).

The transit peptide at methionine 1–phenylalanine 19 directs the protein to the mitochondrion. A domain I region spans residues glutamine 20 to leucine 204. Position 59 is an N6-acetyllysine; alternate (lysine 59). Lysine 59 carries the N6-succinyllysine; alternate modification. Lysine 62 is subject to N6-acetyllysine. Lysine 69 bears the N6-acetyllysine; alternate mark. Lysine 69 carries the N6-succinyllysine; alternate modification. N6-acetyllysine is present on lysine 75. A Phosphothreonine modification is found at threonine 93. Lysine 101 and lysine 139 each carry N6-acetyllysine. Serine 140 carries the phosphoserine modification. Lysine 158 is subject to N6-acetyllysine; alternate. Residue lysine 158 is modified to N6-succinyllysine; alternate. Residue lysine 164 is modified to N6-acetyllysine. Lysine 187 carries the post-translational modification N6-succinyllysine. Lysine 203 carries the N6-acetyllysine; alternate modification. Lysine 203 bears the N6-succinyllysine; alternate mark. Residues threonine 205 to lysine 333 are domain II. Lysine 216 bears the N6-succinyllysine mark. Arginine 223 contacts FAD. N6-acetyllysine; alternate is present on residues lysine 226 and lysine 232. Residues lysine 226 and lysine 232 each carry the N6-succinyllysine; alternate modification. Residues serine 248, valine 263–threonine 266, serine 281–histidine 286, and asparagine 300 each bind FAD. Lysine 301 carries the N6-succinyllysine modification. Aspartate 318–leucine 319 serves as a coordination point for FAD.

Belongs to the ETF alpha-subunit/FixB family. As to quaternary structure, heterodimer composed of ETFA and ETFB. Identified in a complex that contains ETFA, ETFB and ETFRF1. Interaction with ETFRF1 promotes dissociation of the bound FAD and loss of electron transfer activity. Interacts with TASOR. FAD serves as cofactor.

The protein localises to the mitochondrion matrix. In terms of biological role, heterodimeric electron transfer flavoprotein that accepts electrons from several mitochondrial dehydrogenases, including acyl-CoA dehydrogenases, glutaryl-CoA and sarcosine dehydrogenase. It transfers the electrons to the main mitochondrial respiratory chain via ETF-ubiquinone oxidoreductase (ETF dehydrogenase). Required for normal mitochondrial fatty acid oxidation and normal amino acid metabolism. The sequence is that of Electron transfer flavoprotein subunit alpha, mitochondrial (ETFA) from Macaca fascicularis (Crab-eating macaque).